The sequence spans 351 residues: Probable dual-specificity RNA methyltransferase RlmN (351 aa).

The Proton acceptor role is filled by E97. One can recognise a Radical SAM core domain in the interval 103-337 (YDYGNTVCIS…VTVRKERGVD (235 aa)). An intrachain disulfide couples C110 to C342. Residues C117, C121, and C124 each contribute to the [4Fe-4S] cluster site. Residues 166-167 (GE), S198, 221-223 (SLH), and N299 contribute to the S-adenosyl-L-methionine site. Residue C342 is the S-methylcysteine intermediate of the active site.

This sequence belongs to the radical SAM superfamily. RlmN family. [4Fe-4S] cluster is required as a cofactor.

The protein resides in the cytoplasm. The catalysed reaction is adenosine(2503) in 23S rRNA + 2 reduced [2Fe-2S]-[ferredoxin] + 2 S-adenosyl-L-methionine = 2-methyladenosine(2503) in 23S rRNA + 5'-deoxyadenosine + L-methionine + 2 oxidized [2Fe-2S]-[ferredoxin] + S-adenosyl-L-homocysteine. It carries out the reaction adenosine(37) in tRNA + 2 reduced [2Fe-2S]-[ferredoxin] + 2 S-adenosyl-L-methionine = 2-methyladenosine(37) in tRNA + 5'-deoxyadenosine + L-methionine + 2 oxidized [2Fe-2S]-[ferredoxin] + S-adenosyl-L-homocysteine. Its function is as follows. Specifically methylates position 2 of adenine 2503 in 23S rRNA and position 2 of adenine 37 in tRNAs. The protein is Probable dual-specificity RNA methyltransferase RlmN of Natranaerobius thermophilus (strain ATCC BAA-1301 / DSM 18059 / JW/NM-WN-LF).